Consider the following 264-residue polypeptide: Low molecular mass lipoprotein PBMHP-12 (264 aa).

A signal peptide spans 1–16; that stretch reads MKLLVVFAMCVPAASA.

Belongs to the 30 kDa lipoprotein family.

It localises to the secreted. This chain is Low molecular mass lipoprotein PBMHP-12, found in Bombyx mori (Silk moth).